A 182-amino-acid chain; its full sequence is Antigenic integral membrane glycoprotein (182 aa).

The signal sequence occupies residues 1 to 35 (MFSFHERMKKKHVTIRVYKHERILVFLFVLFISTT). N-linked (GlcNAc...) asparagine glycans are attached at residues asparagine 88 and asparagine 120. A helical membrane pass occupies residues 162 to 180 (EFLMSSCIVITLNLFIFMY). The S-palmitoyl cysteine moiety is linked to residue cysteine 168.

The protein resides in the cell membrane. Its function is as follows. Major antigen in the surface tegument. The protein is Antigenic integral membrane glycoprotein of Schistosoma mansoni (Blood fluke).